The chain runs to 465 residues: Keratin, type I cytoskeletal 13 (465 aa).

The segment covering 1–28 has biased composition (polar residues); the sequence is MNFTSFSITQGSRPQPPSTRGFSGNSFK. Positions 1-47 are disordered; the sequence is MNFTSFSITQGSRPQPPSTRGFSGNSFKSDLIPQSRRSHSVYGTPGS. The tract at residues 1-98 is head; that stretch reads MNFTSFSITQ…SGGSDLLLGT (98 aa). The tract at residues 99-135 is coil 1A; the sequence is SGKEAMQNLNDRLASYLEKVRSLEERNRELEQKIREW. The region spanning 100 to 412 is the IF rod domain; sequence GKEAMQNLND…ILLEGDEGKF (313 aa). The linker 1 stretch occupies residues 136 to 154; that stretch reads YEKQGAGTKTKDFSHYFKI. The tract at residues 155-246 is coil 1B; it reads IADLQKQIHD…KSHDEEMKAL (92 aa). The linker 12 stretch occupies residues 247–269; sequence RSQLGGQVNVEVDAAPAEDLTKK. Positions 270–408 are coil 2; it reads LERMRQQYEQ…RTYRILLEGD (139 aa). A tail region spans residues 409–465; that stretch reads EGKFQTSPHHPSIVTKQTETVVTPVVITNVKTVVEEIIDGKIVSKKEYPGPPEKLMI.

The protein belongs to the intermediate filament family. As to quaternary structure, heterotetramer of two type I and two type II keratins. Expressed in skin.

Type 1 keratin. May maintain oral mucosal cell homeostasis and tissue organization in response to mechanical stress. In Protopterus aethiopicus (Marbled lungfish), this protein is Keratin, type I cytoskeletal 13 (KRT13).